The primary structure comprises 23 residues: Nephrotoxin PsTX-115 (23 aa).

Its subcellular location is the secreted. The protein localises to the nematocyst. In terms of biological role, nephrotoxin. When injected intravenously in rats, causes severe destructive glomerular changes. At 24 hours post-injection partial disruption of the glomerular basement membrane, massive thrombus formation in glomerular capillaries, severe mesangiolysis and infiltrating cells were observed in the majority of glomeruli. In Phyllodiscus semoni (Night anemone), this protein is Nephrotoxin PsTX-115.